Reading from the N-terminus, the 258-residue chain is Membrane-associated protein Vipp1 (258 aa).

The tract at residues 217–258 (MLPPATPVTQAQLPPQQETTPAKSNEVVDAELDSLRKQLDQL) is disordered. Residues 223–239 (PVTQAQLPPQQETTPAK) are compositionally biased toward polar residues. Basic and acidic residues predominate over residues 249–258 (DSLRKQLDQL).

It belongs to the PspA/Vipp/IM30 family. As to quaternary structure, polymerizes to form rings, filaments and ribbons. Rings are formed by stacked rungs that tilt to give a dome-shaped curvature. Rings form with symmetries ranging from C11 (55 subunits) to C17 (119 subunits).

It is found in the cell inner membrane. In terms of biological role, a membrane remodeling protein capable of forming rings and/or filaments on membranes, which then curve and tubulate the bilayer. Rings will form on liposomes, altering their positive curvature so the lipid bilayer is remodeled into a negative curve as the membrane enters the ring. Ring stacks of varying lengths can be seen joining isolated liposomes. A lipid monolayer can be drawn into the center of the rings. Required for thylakoid formation. This is Membrane-associated protein Vipp1 from Nostoc punctiforme (strain ATCC 29133 / PCC 73102).